The following is a 357-amino-acid chain: UDP-N-acetylglucosamine--N-acetylmuramyl-(pentapeptide) pyrophosphoryl-undecaprenol N-acetylglucosamine transferase (357 aa).

Residues 7 to 9, asparagine 119, arginine 159, serine 187, isoleucine 241, and glutamine 286 contribute to the UDP-N-acetyl-alpha-D-glucosamine site; that span reads TGG.

Belongs to the glycosyltransferase 28 family. MurG subfamily.

It localises to the cell inner membrane. The catalysed reaction is di-trans,octa-cis-undecaprenyl diphospho-N-acetyl-alpha-D-muramoyl-L-alanyl-D-glutamyl-meso-2,6-diaminopimeloyl-D-alanyl-D-alanine + UDP-N-acetyl-alpha-D-glucosamine = di-trans,octa-cis-undecaprenyl diphospho-[N-acetyl-alpha-D-glucosaminyl-(1-&gt;4)]-N-acetyl-alpha-D-muramoyl-L-alanyl-D-glutamyl-meso-2,6-diaminopimeloyl-D-alanyl-D-alanine + UDP + H(+). It participates in cell wall biogenesis; peptidoglycan biosynthesis. Its function is as follows. Cell wall formation. Catalyzes the transfer of a GlcNAc subunit on undecaprenyl-pyrophosphoryl-MurNAc-pentapeptide (lipid intermediate I) to form undecaprenyl-pyrophosphoryl-MurNAc-(pentapeptide)GlcNAc (lipid intermediate II). This Nitrosomonas europaea (strain ATCC 19718 / CIP 103999 / KCTC 2705 / NBRC 14298) protein is UDP-N-acetylglucosamine--N-acetylmuramyl-(pentapeptide) pyrophosphoryl-undecaprenol N-acetylglucosamine transferase.